A 168-amino-acid polypeptide reads, in one-letter code: Transcription antitermination protein NusB (168 aa).

The segment at 147–168 (RGLINNSSRNTSRSEEKHSTEK) is disordered. The span at 158-168 (SRSEEKHSTEK) shows a compositional bias: basic and acidic residues.

The protein belongs to the NusB family.

Involved in transcription antitermination. Required for transcription of ribosomal RNA (rRNA) genes. Binds specifically to the boxA antiterminator sequence of the ribosomal RNA (rrn) operons. The protein is Transcription antitermination protein NusB of Chlorobium phaeobacteroides (strain BS1).